A 298-amino-acid chain; its full sequence is Apolipoprotein E (298 aa).

A signal peptide spans 1 to 18 (MKILWAALVLTLLAGCRA). Tandem repeats lie at residues 74–95 (LLMEDTMKELKAYKSELEKEVG), 96–117 (PMAEDTKARLSKELQGAQARLA), 118–139 (GDMEEVRNRLSQYRSEVQAMLG), 140–161 (QSSEELRARLASHLRKLRKRLQ), 162–183 (RDAEELQKRLAVYKAGAQEGAE), and 223–244 (GRLEKVGSQARDRLEEVREQME). Positions 74–244 (LLMEDTMKEL…RLEEVREQME (171 aa)) are 8 X 22 AA approximate tandem repeats. The residue at position 137 (M137) is a Methionine sulfoxide. S141 is subject to Phosphoserine. Positions 152–162 (HLRKLRKRLQR) are LDL and other lipoprotein receptors binding. Residue 156–159 (LRKR) coordinates heparin. Positions 204–272 (ALTSHPLRER…SWFEPMVEDL (69 aa)) are lipid-binding and lipoprotein association. 218 to 225 (GEQVRGRL) contributes to the heparin binding site. A specificity for association with VLDL region spans residues 260–272 (RLKSWFEPMVEDL).

It belongs to the apolipoprotein A1/A4/E family. As to quaternary structure, homotetramer. May interact with ABCA1; functionally associated with ABCA1 in the biogenesis of HDLs. May interact with APP/A4 amyloid-beta peptide; the interaction is extremely stable in vitro but its physiological significance is unclear. May interact with MAPT. May interact with MAP2. In the cerebrospinal fluid, interacts with secreted SORL1. Interacts with PMEL; this allows the loading of PMEL luminal fragment on ILVs to induce fibril nucleation. In terms of processing, APOE exists as multiple glycosylated and sialylated glycoforms within cells and in plasma. The extent of glycosylation and sialylation are tissue and context specific. Post-translationally, glycated in plasma VLDL. Phosphorylated by FAM20C in the extracellular medium.

Its subcellular location is the secreted. It localises to the extracellular space. The protein resides in the extracellular matrix. It is found in the extracellular vesicle. The protein localises to the endosome. Its subcellular location is the multivesicular body. In terms of biological role, APOE is an apolipoprotein, a protein associating with lipid particles, that mainly functions in lipoprotein-mediated lipid transport between organs via the plasma and interstitial fluids. APOE is a core component of plasma lipoproteins and is involved in their production, conversion and clearance. Apolipoproteins are amphipathic molecules that interact both with lipids of the lipoprotein particle core and the aqueous environment of the plasma. As such, APOE associates with chylomicrons, chylomicron remnants, very low density lipoproteins (VLDL) and intermediate density lipoproteins (IDL) but shows a preferential binding to high-density lipoproteins (HDL). It also binds a wide range of cellular receptors including the LDL receptor/LDLR, the LDL receptor-related proteins LRP1, LRP2 and LRP8 and the very low-density lipoprotein receptor/VLDLR that mediate the cellular uptake of the APOE-containing lipoprotein particles. Finally, APOE also has a heparin-binding activity and binds heparan-sulfate proteoglycans on the surface of cells, a property that supports the capture and the receptor-mediated uptake of APOE-containing lipoproteins by cells. A main function of APOE is to mediate lipoprotein clearance through the uptake of chylomicrons, VLDLs, and HDLs by hepatocytes. APOE is also involved in the biosynthesis by the liver of VLDLs as well as their uptake by peripheral tissues ensuring the delivery of triglycerides and energy storage in muscle, heart and adipose tissues. By participating in the lipoprotein-mediated distribution of lipids among tissues, APOE plays a critical role in plasma and tissues lipid homeostasis. APOE is also involved in two steps of reverse cholesterol transport, the HDLs-mediated transport of cholesterol from peripheral tissues to the liver, and thereby plays an important role in cholesterol homeostasis. First, it is functionally associated with ABCA1 in the biogenesis of HDLs in tissues. Second, it is enriched in circulating HDLs and mediates their uptake by hepatocytes. APOE also plays an important role in lipid transport in the central nervous system, regulating neuron survival and sprouting. This Hydrochoerus hydrochaeris (Capybara) protein is Apolipoprotein E (APOE).